Consider the following 250-residue polypeptide: uncharacterized protein (250 aa).

This sequence belongs to the glycosyltransferase 2 family.

This is an uncharacterized protein from Haemophilus influenzae (strain ATCC 51907 / DSM 11121 / KW20 / Rd).